Here is a 427-residue protein sequence, read N- to C-terminus: 3-phosphoshikimate 1-carboxyvinyltransferase (427 aa).

3-phosphoshikimate-binding residues include Lys-20, Ser-21, and Arg-25. Phosphoenolpyruvate is bound at residue Lys-20. 2 residues coordinate phosphoenolpyruvate: Gly-92 and Arg-120. Ser-166, Gln-168, Asp-312, and Lys-339 together coordinate 3-phosphoshikimate. Gln-168 contributes to the phosphoenolpyruvate binding site. Residue Asp-312 is the Proton acceptor of the active site. Residues Arg-343 and Arg-385 each contribute to the phosphoenolpyruvate site.

It belongs to the EPSP synthase family. In terms of assembly, monomer.

Its subcellular location is the cytoplasm. The enzyme catalyses 3-phosphoshikimate + phosphoenolpyruvate = 5-O-(1-carboxyvinyl)-3-phosphoshikimate + phosphate. It participates in metabolic intermediate biosynthesis; chorismate biosynthesis; chorismate from D-erythrose 4-phosphate and phosphoenolpyruvate: step 6/7. Functionally, catalyzes the transfer of the enolpyruvyl moiety of phosphoenolpyruvate (PEP) to the 5-hydroxyl of shikimate-3-phosphate (S3P) to produce enolpyruvyl shikimate-3-phosphate and inorganic phosphate. This chain is 3-phosphoshikimate 1-carboxyvinyltransferase, found in Streptococcus mutans serotype c (strain ATCC 700610 / UA159).